A 467-amino-acid chain; its full sequence is MANRKLFIKSYGCQMNVYDAGRMADVMAPLGYDLVSEADGADLVILNTCHIREKAAEKVFSDLGRLRPFKEAMAAEGRRMLVAVAGCVAQAEGAELMARAKIVDMVVGPQAYHRLPEMVAKVERGAGRVLDTDFPIEPKFDFLPAPQAHGPSAFLSVQEGCDKFCTFCVVPYTRGAEYSRPVADVLREAALLAEGGVREITLLGQNVNAYHGEAPDGRTWGLGRLARALAEIPGVARLRYTTSHPRDVDDDLIAAHREVAALTPFIHLPVQSGSDRILAAMNRGHDVEGYRRIIDRLRAARDDMAFSSDFIVGFPGESERDFQATLALIDEVRFIQAYSFKYSPRPGTPAAALSAQLPEAEKSARLIALQARLVEIQQAFNQACVGRPMDVLLDRPGRHAGQLVGRSPWMQPVHLEAPAALLGTLAPVVVETATSNSLAARLVEGNSSMSSDRVLAEEAPPPARIRA.

Residues 4–124 (RKLFIKSYGC…LPEMVAKVER (121 aa)) enclose the MTTase N-terminal domain. [4Fe-4S] cluster contacts are provided by Cys-13, Cys-49, Cys-87, Cys-161, Cys-165, and Cys-168. A Radical SAM core domain is found at 147–379 (QAHGPSAFLS…QARLVEIQQA (233 aa)). In terms of domain architecture, TRAM spans 382 to 444 (QACVGRPMDV…SNSLAARLVE (63 aa)).

Belongs to the methylthiotransferase family. MiaB subfamily. Monomer. [4Fe-4S] cluster serves as cofactor.

It is found in the cytoplasm. It catalyses the reaction N(6)-dimethylallyladenosine(37) in tRNA + (sulfur carrier)-SH + AH2 + 2 S-adenosyl-L-methionine = 2-methylsulfanyl-N(6)-dimethylallyladenosine(37) in tRNA + (sulfur carrier)-H + 5'-deoxyadenosine + L-methionine + A + S-adenosyl-L-homocysteine + 2 H(+). In terms of biological role, catalyzes the methylthiolation of N6-(dimethylallyl)adenosine (i(6)A), leading to the formation of 2-methylthio-N6-(dimethylallyl)adenosine (ms(2)i(6)A) at position 37 in tRNAs that read codons beginning with uridine. The chain is tRNA-2-methylthio-N(6)-dimethylallyladenosine synthase from Rhodospirillum rubrum (strain ATCC 11170 / ATH 1.1.1 / DSM 467 / LMG 4362 / NCIMB 8255 / S1).